The primary structure comprises 355 residues: Protein pelota homolog (355 aa).

The protein belongs to the eukaryotic release factor 1 family. Pelota subfamily. In terms of assembly, monomer. A divalent metal cation is required as a cofactor.

The protein resides in the cytoplasm. In terms of biological role, may function in recognizing stalled ribosomes, interact with stem-loop structures in stalled mRNA molecules, and effect endonucleolytic cleavage of the mRNA. May play a role in the release non-functional ribosomes and degradation of damaged mRNAs. Has endoribonuclease activity. In Natronomonas pharaonis (strain ATCC 35678 / DSM 2160 / CIP 103997 / JCM 8858 / NBRC 14720 / NCIMB 2260 / Gabara) (Halobacterium pharaonis), this protein is Protein pelota homolog.